The chain runs to 108 residues: Thiosulfate sulfurtransferase GlpE (108 aa).

In terms of domain architecture, Rhodanese spans 17-105 (HQGTAVLVDI…WHRHFPSEVA (89 aa)). Cys65 acts as the Cysteine persulfide intermediate in catalysis.

Belongs to the GlpE family.

Its subcellular location is the cytoplasm. The enzyme catalyses thiosulfate + hydrogen cyanide = thiocyanate + sulfite + 2 H(+). The catalysed reaction is thiosulfate + [thioredoxin]-dithiol = [thioredoxin]-disulfide + hydrogen sulfide + sulfite + 2 H(+). Its function is as follows. Transferase that catalyzes the transfer of sulfur from thiosulfate to thiophilic acceptors such as cyanide or dithiols. May function in a CysM-independent thiosulfate assimilation pathway by catalyzing the conversion of thiosulfate to sulfite, which can then be used for L-cysteine biosynthesis. This Citrobacter koseri (strain ATCC BAA-895 / CDC 4225-83 / SGSC4696) protein is Thiosulfate sulfurtransferase GlpE.